We begin with the raw amino-acid sequence, 549 residues long: Threonine--tRNA ligase catalytic subunit (549 aa).

The catalytic stretch occupies residues 142–437 (DHRIIGDRLD…LLEHFRGKLP (296 aa)). Zn(2+) contacts are provided by Cys-235, His-286, and His-414.

It belongs to the class-II aminoacyl-tRNA synthetase family. Homodimer. Probably interacts with its editing subunit. It depends on Zn(2+) as a cofactor.

It localises to the cytoplasm. It catalyses the reaction tRNA(Thr) + L-threonine + ATP = L-threonyl-tRNA(Thr) + AMP + diphosphate + H(+). Functionally, catalyzes the attachment of threonine to tRNA(Thr) in a two-step reaction: L-threonine is first activated by ATP to form Thr-AMP and then transferred to the acceptor end of tRNA(Thr). Also activates L-serine and transfers it to tRNA(Thr) but cannot deacylate incorrectly charged amino acid; unlike most archaea the editing function is found in a freestanding protein. The protein is Threonine--tRNA ligase catalytic subunit of Sulfolobus acidocaldarius (strain ATCC 33909 / DSM 639 / JCM 8929 / NBRC 15157 / NCIMB 11770).